The following is a 515-amino-acid chain: MSTRVYPAQVDVAIVGSGPAGATYARILSERASSATIAMFEVGPTVSDPPGAHVKNIADADERAHAQRRSEGPHAREDDDRVGGIVKSAQRRARPGTYLLESGYQADGEDGLPVAAFSSNVGGMAAHWTGACPRPNDSERIGFLDETGELDELLSEGERLLGVTTDAFDASPYAGIVRERLAAVEDAHRDADERVQRMPLAVHRRDDGPLVWSGSDVVLGDITRGNPNFTLFDESLVTRVLVEDGRAAGVVVTDVRTGERRDVRARFVVVAADALRTPQLLWASGIRPDALGRYLNDQAQIVFAVRMRDFTPVVDADGVPQTGLSEYTGVTWVPFTDDMPFHGQVMQLDASPVKLADDDPAAPGSIVGLGLFCAKDLQASDRVAFSDSDVDGYGMPAMQLHYTLSDRDHATIDRAKAEIVRLGKAIGDPLDDRPFVMPLGASLHYQGTVRMGLADDGASVCSPDSEVWGAPGLFVAGNGVIPTATACNPTLTGVALAVRGARHIADEITADLASV.

Glu-41 serves as a coordination point for FAD. Residues 62–82 (ERAHAQRRSEGPHAREDDDRV) are compositionally biased toward basic and acidic residues. Residues 62 to 90 (ERAHAQRRSEGPHAREDDDRVGGIVKSAQ) are disordered. 6 residues coordinate FAD: Ser-118, Asn-120, Met-124, Thr-129, Ala-131, and Val-237. The active-site Proton acceptor is His-444. FAD-binding residues include Asn-478 and Thr-490.

This sequence belongs to the GMC oxidoreductase family. As to quaternary structure, monomer. Requires FAD as cofactor.

It carries out the reaction isoorientin + O2 = 3''-dehydroisoorientin + H2O2. The enzyme catalyses mangiferin + O2 = 3'-dehydromangiferin + H2O2. Functionally, FAD-dependent C-glycoside-metabolizing enzyme that participates in the degradation of certain C-glycosides by catalyzing the oxidation of the hydroxyl group at the C3 position of the sugar moiety. Shows oxidase activity toward C-glycosides such as isoorientin and mangiferin but cannot use carminic acid, puerarin, orientin or aloesin. Shows weak activity (100 to 1000-fold lower) with O-glycosides. Probably plays a crucial role in the metabolism of C-glycosides in nature. The chain is C-glycoside 3-oxidase from Microbacterium trichothecenolyticum (Aureobacterium trichothecenolyticum).